A 481-amino-acid polypeptide reads, in one-letter code: OTU domain-containing protein 1 (481 aa).

Disordered regions lie at residues 18–60 (PTAA…AAAE) and 202–282 (LAAA…IVSR). Low complexity predominate over residues 38-58 (PPGAAGAAPEPETGECQPAAA). Basic and acidic residues predominate over residues 225–257 (GEEHLAERGPRGWERGGDRCDAPGGDAARRPDP). Low complexity predominate over residues 261–281 (APPAGSIEAAPSSAAEPVIVS). Residues 309-438 (KYRFHIIPDG…NGHYDAVFDH (130 aa)) form the OTU domain. The cys-loop stretch occupies residues 314-320 (IIPDGNC). D317 is a catalytic residue. C320 serves as the catalytic Nucleophile. Positions 369–379 (AAQDGAWAGYP) are his-loop. The tract at residues 426-431 (WLSNGH) is variable-loop. Residue H431 is part of the active site. A UIM domain is found at 457 to 476 (KRDEELAKSMAISLSKMYIE).

The enzyme catalyses Thiol-dependent hydrolysis of ester, thioester, amide, peptide and isopeptide bonds formed by the C-terminal Gly of ubiquitin (a 76-residue protein attached to proteins as an intracellular targeting signal).. Its function is as follows. Deubiquitinating enzyme that specifically hydrolyzes 'Lys-63'-linked polyubiquitin to monoubiquitin. Required for the stability and translation of a subset mRNAs with a high abundance of rare codons by mediating deubiquitination of 40S ribosomal protein RPS10/eS10, thereby antagonizing ZNF598-mediated 40S ubiquitination. The abundance of rare codons in mRNAs can limit the translation rate and can lead to ribosome collisions that trigger activation of ribosome quality control (RQC) pathway by ZNF598. OTUD1-mediated deubiquitination prevents activation of the RQC and subsequent dissociation of ribosomes and stimulates formation of polysomes and translation. The protein is OTU domain-containing protein 1 of Homo sapiens (Human).